The sequence spans 287 residues: Large ribosomal subunit protein uL5m (287 aa).

Residues 1–18 (MLGIRKNIRISVNFLQRR) constitute a mitochondrion transit peptide. Basic and acidic residues predominate over residues 80-89 (DEHTQKDRLP). A disordered region spans residues 80–109 (DEHTQKDRLPRWIGDNPYYKNRPPQKMRGN).

Belongs to the universal ribosomal protein uL5 family. As to quaternary structure, component of the mitochondrial large ribosomal subunit (mt-LSU). Mature yeast 74S mitochondrial ribosomes consist of a small (37S) and a large (54S) subunit. The 37S small subunit contains a 15S ribosomal RNA (15S mt-rRNA) and at least 32 different proteins. The 54S large subunit contains a 21S rRNA (21S mt-rRNA) and at least 45 different proteins. Unlike bacterial L5, uL5m does not bind zinc.

Its subcellular location is the mitochondrion. Component of the mitochondrial ribosome (mitoribosome), a dedicated translation machinery responsible for the synthesis of mitochondrial genome-encoded proteins, including at least some of the essential transmembrane subunits of the mitochondrial respiratory chain. The mitoribosomes are attached to the mitochondrial inner membrane and translation products are cotranslationally integrated into the membrane. The sequence is that of Large ribosomal subunit protein uL5m (mrpl7) from Schizosaccharomyces pombe (strain 972 / ATCC 24843) (Fission yeast).